A 60-amino-acid polypeptide reads, in one-letter code: uncharacterized protein (60 aa).

This is an uncharacterized protein from Dryophytes versicolor (chameleon treefrog).